Here is a 728-residue protein sequence, read N- to C-terminus: Catalase-peroxidase (728 aa).

The tract at residues 1-26 (MDNPTDTAGKCPVAHGNKPRGPSNRD) is disordered. Residues 96-218 (WHSAGTYRIT…LGAVQMGLIY (123 aa)) constitute a cross-link (tryptophyl-tyrosyl-methioninium (Trp-Tyr) (with M-244)). Histidine 97 serves as the catalytic Proton acceptor. The tryptophyl-tyrosyl-methioninium (Tyr-Met) (with W-96) cross-link spans 218–244 (YVNPEGPGGNPDPLASARDIRETFARM). Residue histidine 259 participates in heme b binding.

Belongs to the peroxidase family. Peroxidase/catalase subfamily. Homodimer or homotetramer. Heme b is required as a cofactor. Formation of the three residue Trp-Tyr-Met cross-link is important for the catalase, but not the peroxidase activity of the enzyme.

The enzyme catalyses H2O2 + AH2 = A + 2 H2O. The catalysed reaction is 2 H2O2 = O2 + 2 H2O. Functionally, bifunctional enzyme with both catalase and broad-spectrum peroxidase activity. In Rhizobium etli (strain CIAT 652), this protein is Catalase-peroxidase.